We begin with the raw amino-acid sequence, 72 residues long: Translation initiation factor IF-1 2 (72 aa).

The S1-like domain maps to 1–72 (MAKEDTIQMQ…SRARIVFRAK (72 aa)).

It belongs to the IF-1 family. In terms of assembly, component of the 30S ribosomal translation pre-initiation complex which assembles on the 30S ribosome in the order IF-2 and IF-3, IF-1 and N-formylmethionyl-tRNA(fMet); mRNA recruitment can occur at any time during PIC assembly.

It is found in the cytoplasm. Its function is as follows. One of the essential components for the initiation of protein synthesis. Stabilizes the binding of IF-2 and IF-3 on the 30S subunit to which N-formylmethionyl-tRNA(fMet) subsequently binds. Helps modulate mRNA selection, yielding the 30S pre-initiation complex (PIC). Upon addition of the 50S ribosomal subunit IF-1, IF-2 and IF-3 are released leaving the mature 70S translation initiation complex. This chain is Translation initiation factor IF-1 2, found in Chromobacterium violaceum (strain ATCC 12472 / DSM 30191 / JCM 1249 / CCUG 213 / NBRC 12614 / NCIMB 9131 / NCTC 9757 / MK).